Reading from the N-terminus, the 389-residue chain is Serpentine receptor class alpha/beta-14 (389 aa).

Topologically, residues 1–45 (MPSDDFVKTARKALISHSVSIQNYTEDDCQIAFHATTNSFMQTIR) are extracellular. N-linked (GlcNAc...) asparagine glycosylation is present at N23. A helical membrane pass occupies residues 46–66 (LVHIFFCTFGAISSSLFIYVL). At 67 to 81 (LNSSSRNLHRNLRIS) the chain is on the cytoplasmic side. A helical membrane pass occupies residues 82–102 (LASLAFAALIACLQLDFIAFY). Residues 103-123 (HLALTLTADNACDSMYEARKC) lie on the Extracellular side of the membrane. C123 and C198 are disulfide-bonded. A helical membrane pass occupies residues 124–144 (AILRFPVVLSIYATLCGIIVL). At 145–167 (AIERTIATLKYKTYEANGSRVVG) the chain is on the cytoplasmic side. A helical transmembrane segment spans residues 168–188 (LVLVTGQWFVCIIVAVFSVLL). Over 189–208 (RSDPGYVHYCTAYVSHPRTS) the chain is Extracellular. The chain crosses the membrane as a helical span at residues 209-229 (VFSLCFMSALEVATLVYFVLL). Residues 230–268 (LQSNQRRQVNEFVNKAMHSLSERYQLQENVRIMKILIPS) lie on the Cytoplasmic side of the membrane. A helical membrane pass occupies residues 269-289 (ITVHAILGFIGLGSMLAFAII). The Extracellular portion of the chain corresponds to 290–303 (YRYADERLIVGFAP). Residues 304 to 324 (FSEVVLLVIPIYAVVFPIVAV) form a helical membrane-spanning segment. At 325–389 (VQNKQLRLAS…FDLLNEMWKK (65 aa)) the chain is on the cytoplasmic side.

This sequence belongs to the nematode receptor-like protein srab family.

The protein resides in the membrane. This Caenorhabditis elegans protein is Serpentine receptor class alpha/beta-14.